A 423-amino-acid polypeptide reads, in one-letter code: Serine--tRNA ligase (423 aa).

Residue 229–231 (TAE) coordinates L-serine. 258-260 (RRE) lines the ATP pocket. Glu-281 provides a ligand contact to L-serine. 345–348 (EISS) is a binding site for ATP. Ser-379 contacts L-serine.

It belongs to the class-II aminoacyl-tRNA synthetase family. Type-1 seryl-tRNA synthetase subfamily. As to quaternary structure, homodimer. The tRNA molecule binds across the dimer.

The protein localises to the cytoplasm. It carries out the reaction tRNA(Ser) + L-serine + ATP = L-seryl-tRNA(Ser) + AMP + diphosphate + H(+). The enzyme catalyses tRNA(Sec) + L-serine + ATP = L-seryl-tRNA(Sec) + AMP + diphosphate + H(+). It functions in the pathway aminoacyl-tRNA biosynthesis; selenocysteinyl-tRNA(Sec) biosynthesis; L-seryl-tRNA(Sec) from L-serine and tRNA(Sec): step 1/1. Catalyzes the attachment of serine to tRNA(Ser). Is also able to aminoacylate tRNA(Sec) with serine, to form the misacylated tRNA L-seryl-tRNA(Sec), which will be further converted into selenocysteinyl-tRNA(Sec). The chain is Serine--tRNA ligase (serS1) from Methanosarcina barkeri (strain Fusaro / DSM 804).